A 372-amino-acid chain; its full sequence is uncharacterized protein (372 aa).

S-adenosyl-L-methionine contacts are provided by residues D202 and 227–229 (GDF).

The protein belongs to the class I-like SAM-binding methyltransferase superfamily. Cation-independent O-methyltransferase family.

This is an uncharacterized protein from Methanocaldococcus jannaschii (strain ATCC 43067 / DSM 2661 / JAL-1 / JCM 10045 / NBRC 100440) (Methanococcus jannaschii).